The following is a 276-amino-acid chain: Large ribosomal subunit protein uL2 (276 aa).

Disordered stretches follow at residues 26–45 and 224–276; these read RSTP…GRNC and AMNP…RGQK. Over residues 259–276 the composition is skewed to basic residues; that stretch reads RDKKKASSKLIIKRRGQK.

This sequence belongs to the universal ribosomal protein uL2 family. In terms of assembly, part of the 50S ribosomal subunit. Forms a bridge to the 30S subunit in the 70S ribosome.

One of the primary rRNA binding proteins. Required for association of the 30S and 50S subunits to form the 70S ribosome, for tRNA binding and peptide bond formation. It has been suggested to have peptidyltransferase activity; this is somewhat controversial. Makes several contacts with the 16S rRNA in the 70S ribosome. The chain is Large ribosomal subunit protein uL2 from Oleidesulfovibrio alaskensis (strain ATCC BAA-1058 / DSM 17464 / G20) (Desulfovibrio alaskensis).